Consider the following 227-residue polypeptide: MLLTIDNVLTEEELAAASSLLAESAWVSGLVTAGAQAAKVKNNQQLPEDSPQMAALRGLVLGALNRNALFFTATLPKKIMPPFFNRYSGKTNHYGFHVDNAMRMLPDGVGYVRADVSATLFLSNPQTYDGGELVINDTFGQQSVKLQAGSMVIYPSSSVHQVTPVTHGERIACFMFIQSMVRDPNQRRLLYEMDMALLQLRQNIGETEAVVSLTGTYHNLLRQWAES.

A Fe2OG dioxygenase domain is found at 78–179 (KIMPPFFNRY…RIACFMFIQS (102 aa)). Residues histidine 97, aspartate 99, and histidine 160 each contribute to the Fe cation site. Arginine 170 contacts 2-oxoglutarate.

Requires Fe(2+) as cofactor. L-ascorbate serves as cofactor.

In Nitrosomonas eutropha (strain DSM 101675 / C91 / Nm57), this protein is PKHD-type hydroxylase Neut_0373.